Consider the following 275-residue polypeptide: MRHHGRMHARESDVAGGPARDSAGGPARDSAGGPARDSAGDDSPSAHRHRRVTSFRSRRSALSGGQQDTWERLWPELGTEARDDDGRPAALIDTAAWFGRTAPLVLEIGSGTGTSTLAMAQDEPDIDVIAVEVYRRGLAQLLTGIDRAGVRNIRMIRGDGVDVLEYMVASGSLTGVRVFFPDPWPKARHHKRRLLQPSTVALIADRLRPGGILHAATDHAGYAEQIAAVGDAEPLLRRVDLTDDLPISVRRPVTKYERKALAGPDVAELLWEKVP.

Residues 1 to 73 (MRHHGRMHAR…GGQQDTWERL (73 aa)) form a disordered region. Residues 46–59 (AHRHRRVTSFRSRR) show a composition bias toward basic residues. 4 residues coordinate S-adenosyl-L-methionine: Glu-107, Glu-132, Asp-159, and Asp-182. Asp-182 is a catalytic residue. Substrate contacts are provided by residues Lys-186, Asp-218, and 254-257 (TKYE).

This sequence belongs to the class I-like SAM-binding methyltransferase superfamily. TrmB family.

It carries out the reaction guanosine(46) in tRNA + S-adenosyl-L-methionine = N(7)-methylguanosine(46) in tRNA + S-adenosyl-L-homocysteine. Its pathway is tRNA modification; N(7)-methylguanine-tRNA biosynthesis. Its function is as follows. Catalyzes the formation of N(7)-methylguanine at position 46 (m7G46) in tRNA. The protein is tRNA (guanine-N(7)-)-methyltransferase of Mycobacterium sp. (strain KMS).